The following is a 448-amino-acid chain: Methylenetetrahydrofolate--tRNA-(uracil-5-)-methyltransferase TrmFO (448 aa).

13–18 (GAGLAG) provides a ligand contact to FAD.

Belongs to the MnmG family. TrmFO subfamily. It depends on FAD as a cofactor.

The protein localises to the cytoplasm. The enzyme catalyses uridine(54) in tRNA + (6R)-5,10-methylene-5,6,7,8-tetrahydrofolate + NADH + H(+) = 5-methyluridine(54) in tRNA + (6S)-5,6,7,8-tetrahydrofolate + NAD(+). The catalysed reaction is uridine(54) in tRNA + (6R)-5,10-methylene-5,6,7,8-tetrahydrofolate + NADPH + H(+) = 5-methyluridine(54) in tRNA + (6S)-5,6,7,8-tetrahydrofolate + NADP(+). In terms of biological role, catalyzes the folate-dependent formation of 5-methyl-uridine at position 54 (M-5-U54) in all tRNAs. In Streptococcus pyogenes serotype M4 (strain MGAS10750), this protein is Methylenetetrahydrofolate--tRNA-(uracil-5-)-methyltransferase TrmFO.